We begin with the raw amino-acid sequence, 353 residues long: Photosystem II protein D1 (353 aa).

Thr2 is modified (N-acetylthreonine). At Thr2 the chain carries Phosphothreonine. A run of 3 helical transmembrane segments spans residues 29–46 (YIGW…TATS), 118–133 (HFLL…EWEL), and 142–156 (WIAV…AATA). His118 lines the chlorophyll a pocket. Residue Tyr126 coordinates pheophytin a. [CaMn4O5] cluster contacts are provided by Asp170 and Glu189. A helical membrane pass occupies residues 197–218 (FHMLGVAGVFGGSLFSAMHGSL). Residue His198 coordinates chlorophyll a. Residues His215 and 264–265 (SF) each bind a quinone. A Fe cation-binding site is contributed by His215. Residue His272 coordinates Fe cation. A helical transmembrane segment spans residues 274 to 288 (FLAAWPVVGIWFTAL). [CaMn4O5] cluster-binding residues include His332, Glu333, Asp342, and Ala344. Positions 345 to 353 (AVEAPSING) are excised as a propeptide.

It belongs to the reaction center PufL/M/PsbA/D family. As to quaternary structure, PSII is composed of 1 copy each of membrane proteins PsbA, PsbB, PsbC, PsbD, PsbE, PsbF, PsbH, PsbI, PsbJ, PsbK, PsbL, PsbM, PsbT, PsbX, PsbY, PsbZ, Psb30/Ycf12, at least 3 peripheral proteins of the oxygen-evolving complex and a large number of cofactors. It forms dimeric complexes. The cofactor is The D1/D2 heterodimer binds P680, chlorophylls that are the primary electron donor of PSII, and subsequent electron acceptors. It shares a non-heme iron and each subunit binds pheophytin, quinone, additional chlorophylls, carotenoids and lipids. D1 provides most of the ligands for the Mn4-Ca-O5 cluster of the oxygen-evolving complex (OEC). There is also a Cl(-1) ion associated with D1 and D2, which is required for oxygen evolution. The PSII complex binds additional chlorophylls, carotenoids and specific lipids.. Post-translationally, tyr-161 forms a radical intermediate that is referred to as redox-active TyrZ, YZ or Y-Z. In terms of processing, C-terminally processed by CTPA; processing is essential to allow assembly of the oxygen-evolving complex and thus photosynthetic growth.

It localises to the plastid. Its subcellular location is the chloroplast thylakoid membrane. It carries out the reaction 2 a plastoquinone + 4 hnu + 2 H2O = 2 a plastoquinol + O2. Photosystem II (PSII) is a light-driven water:plastoquinone oxidoreductase that uses light energy to abstract electrons from H(2)O, generating O(2) and a proton gradient subsequently used for ATP formation. It consists of a core antenna complex that captures photons, and an electron transfer chain that converts photonic excitation into a charge separation. The D1/D2 (PsbA/PsbD) reaction center heterodimer binds P680, the primary electron donor of PSII as well as several subsequent electron acceptors. This is Photosystem II protein D1 from Chloranthus spicatus (Chulantree).